Reading from the N-terminus, the 78-residue chain is Large ribosomal subunit protein bL28 (78 aa).

Residues 1 to 21 (MSRVCQVTGKRPMSGNNRSHA) form a disordered region.

The protein belongs to the bacterial ribosomal protein bL28 family.

This chain is Large ribosomal subunit protein bL28, found in Photorhabdus laumondii subsp. laumondii (strain DSM 15139 / CIP 105565 / TT01) (Photorhabdus luminescens subsp. laumondii).